The primary structure comprises 456 residues: Putative F-box/LRR-repeat protein At5g02700 (456 aa).

The region spanning 26–72 (ADFINYMPDDILHHILSFIPTDLAMRTSVLSRRWRHVWCETPCLDIT) is the F-box domain. 5 LRR repeats span residues 126–154 (VRDF…DVTL), 177–202 (FCQI…TLDT), 206–224 (LERL…DINQ), 271–300 (LSPL…TVGE), and 330–355 (FVRS…RPST).

This Arabidopsis thaliana (Mouse-ear cress) protein is Putative F-box/LRR-repeat protein At5g02700.